The primary structure comprises 321 residues: Lipoyl synthase (321 aa).

C68, C73, C79, C94, C98, C101, and S308 together coordinate [4Fe-4S] cluster. The region spanning 80–297 (FNHGTATFMI…KQEALAMGFT (218 aa)) is the Radical SAM core domain.

Belongs to the radical SAM superfamily. Lipoyl synthase family. It depends on [4Fe-4S] cluster as a cofactor.

Its subcellular location is the cytoplasm. It catalyses the reaction [[Fe-S] cluster scaffold protein carrying a second [4Fe-4S](2+) cluster] + N(6)-octanoyl-L-lysyl-[protein] + 2 oxidized [2Fe-2S]-[ferredoxin] + 2 S-adenosyl-L-methionine + 4 H(+) = [[Fe-S] cluster scaffold protein] + N(6)-[(R)-dihydrolipoyl]-L-lysyl-[protein] + 4 Fe(3+) + 2 hydrogen sulfide + 2 5'-deoxyadenosine + 2 L-methionine + 2 reduced [2Fe-2S]-[ferredoxin]. It functions in the pathway protein modification; protein lipoylation via endogenous pathway; protein N(6)-(lipoyl)lysine from octanoyl-[acyl-carrier-protein]: step 2/2. In terms of biological role, catalyzes the radical-mediated insertion of two sulfur atoms into the C-6 and C-8 positions of the octanoyl moiety bound to the lipoyl domains of lipoate-dependent enzymes, thereby converting the octanoylated domains into lipoylated derivatives. This Sodalis glossinidius (strain morsitans) protein is Lipoyl synthase.